The chain runs to 964 residues: Glycine dehydrogenase (decarboxylating) (964 aa).

Positions 1 to 10 (MNSTLQNRNR) are enriched in polar residues. The tract at residues 1–25 (MNSTLQNRNRTNLERVSTDPLDTFP) is disordered. Lys713 carries the N6-(pyridoxal phosphate)lysine modification.

It belongs to the GcvP family. As to quaternary structure, the glycine cleavage system is composed of four proteins: P, T, L and H. Pyridoxal 5'-phosphate serves as cofactor.

It carries out the reaction N(6)-[(R)-lipoyl]-L-lysyl-[glycine-cleavage complex H protein] + glycine + H(+) = N(6)-[(R)-S(8)-aminomethyldihydrolipoyl]-L-lysyl-[glycine-cleavage complex H protein] + CO2. Functionally, the glycine cleavage system catalyzes the degradation of glycine. The P protein binds the alpha-amino group of glycine through its pyridoxal phosphate cofactor; CO(2) is released and the remaining methylamine moiety is then transferred to the lipoamide cofactor of the H protein. This Leptospira borgpetersenii serovar Hardjo-bovis (strain JB197) protein is Glycine dehydrogenase (decarboxylating).